Here is a 421-residue protein sequence, read N- to C-terminus: Cell division protein FtsA (421 aa).

The protein belongs to the FtsA/MreB family. As to quaternary structure, self-interacts. Interacts with FtsZ.

It is found in the cell membrane. Functionally, cell division protein that is involved in the assembly of the Z ring. May serve as a membrane anchor for the Z ring. In Buchnera aphidicola subsp. Baizongia pistaciae (strain Bp), this protein is Cell division protein FtsA.